A 329-amino-acid chain; its full sequence is MTKIYDAANWSKHEDDFTQMFYNQNVKQFWLPEEIALNGDLLTWKYLGKNEQDTYMKVLAGLTLLDTEQGNTGMPIVAEHVDGHQRKAVLNFMAMMENAVHAKSYSNIFMTLAPTETINEVFEWVKQNKYLQKKAQMIVGLYKAIQKDDEISLFKAMVASVYLESFLFYSGFYYPLYFYGQGKLMQSGEIINLILRDEAIHGVYVGLLAQEIYNKQTEEKKAELREFAIDLLNQLYENELEYTEDLYDQVGLSHDVKKFIRYNANKALMNLGFDPYFEEEDINPIVLNGLNTKTKSHDFFSMKGNGYKKATVEPLKDDDFYFEDEKEQI.

3 residues coordinate Fe cation: Asp66, Glu97, and His101. Tyr105 is an active-site residue. Fe cation is bound by residues Glu164, Glu198, and His201.

It belongs to the ribonucleoside diphosphate reductase small chain family. In terms of assembly, tetramer of two alpha and two beta subunits. Fe cation is required as a cofactor.

It catalyses the reaction a 2'-deoxyribonucleoside 5'-diphosphate + [thioredoxin]-disulfide + H2O = a ribonucleoside 5'-diphosphate + [thioredoxin]-dithiol. In terms of biological role, provides the precursors necessary for DNA synthesis. Catalyzes the biosynthesis of deoxyribonucleotides from the corresponding ribonucleotides. This chain is Ribonucleoside-diphosphate reductase subunit beta (nrdF), found in Bacillus subtilis (strain 168).